A 179-amino-acid chain; its full sequence is Segregation and condensation protein B (179 aa).

It belongs to the ScpB family. In terms of assembly, homodimer. Homodimerization may be required to stabilize the binding of ScpA to the Smc head domains. Component of a cohesin-like complex composed of ScpA, ScpB and the Smc homodimer, in which ScpA and ScpB bind to the head domain of Smc. The presence of the three proteins is required for the association of the complex with DNA.

Its subcellular location is the cytoplasm. In terms of biological role, participates in chromosomal partition during cell division. May act via the formation of a condensin-like complex containing Smc and ScpA that pull DNA away from mid-cell into both cell halves. The polypeptide is Segregation and condensation protein B (Staphylococcus haemolyticus (strain JCSC1435)).